Reading from the N-terminus, the 228-residue chain is Ras-related protein Rab-32D (228 aa).

G16–T23 contributes to the GTP binding site. The Effector region signature appears at Y38 to F46. GTP-binding positions include D64 to Q68 and N128 to D131. A disordered region spans residues S183–K228. The segment covering N185–T196 has biased composition (acidic residues). Positions T211 to K228 are enriched in low complexity. The S-geranylgeranyl cysteine moiety is linked to residue C224.

The protein belongs to the small GTPase superfamily. Rab family.

The polypeptide is Ras-related protein Rab-32D (rab32D) (Dictyostelium discoideum (Social amoeba)).